The following is a 795-amino-acid chain: Probable diacylglycerol kinase 3 (795 aa).

EF-hand domains follow at residues T170–V205 and E215–L250. Residues D183, D185, N187, E194, D228, D230, D232, and E239 each contribute to the Ca(2+) site. Phorbol-ester/DAG-type zinc fingers lie at residues S265–C316 and Y329–C375. The DAGKc domain occupies N423–I558.

It belongs to the eukaryotic diacylglycerol kinase family. In terms of assembly, monomer.

The catalysed reaction is a 1,2-diacyl-sn-glycerol + ATP = a 1,2-diacyl-sn-glycero-3-phosphate + ADP + H(+). In terms of biological role, involved in AFD-neuron mediated thermotaxis. Regulates behavior to environmental temperature. Thought to have a role in olfactory adaptation by affecting diacylglycerol levels. This chain is Probable diacylglycerol kinase 3 (dgk-3), found in Caenorhabditis elegans.